The sequence spans 1422 residues: Guanine nucleotide exchange factor subunit RIC1 (1422 aa).

2 WD repeats span residues 64–103 (TQFG…GDKY) and 304–343 (NKTG…LICT). Disordered stretches follow at residues 442-462 (NPKY…SPFA) and 986-1005 (SGES…SSSG). Positions 449–460 (RAERMPRHEKSP) are enriched in basic and acidic residues. 2 positions are modified to phosphothreonine: Thr-991 and Thr-995. A phosphoserine mark is found at Ser-1014, Ser-1016, Ser-1018, Ser-1036, and Ser-1171. Residues 1021–1048 (AENVPPGKFGLQKTLSMPTGPSGKRWSK) form a disordered region. Disordered stretches follow at residues 1179 to 1198 (THRD…DAFL) and 1355 to 1422 (DTFQ…CSVS). Over residues 1378-1396 (GSCSHGSISQSEPGSNNVV) the composition is skewed to polar residues. The span at 1403–1412 (TTQADEEEPL) shows a compositional bias: acidic residues.

It belongs to the RIC1 family. In terms of assembly, forms a complex with RGP1; the interaction enhances RAB6A GTPase activity. Interacts (via central domain) with RGP1. Interacts with RAB6A; the interaction is direct with a preference for RAB6A-GDP. Interacts (via C-terminus domain) with RAB33B; the interaction is direct with a preference for RAB33B-GTP. Interacts with GJA1. Expressed in the eye lens.

It is found in the cytoplasm. It localises to the cytosol. The protein resides in the membrane. In terms of biological role, the RIC1-RGP1 complex acts as a guanine nucleotide exchange factor (GEF), which activates RAB6A by exchanging bound GDP for free GTP, and may thereby be required for efficient fusion of endosome-derived vesicles with the Golgi compartment. The RIC1-RGP1 complex participates in the recycling of mannose-6-phosphate receptors. Required for phosphorylation and localization of GJA1. Is a regulator of procollagen transport and secretion, and is required for correct cartilage morphogenesis and development of the craniofacial skeleton. This Mus musculus (Mouse) protein is Guanine nucleotide exchange factor subunit RIC1.